Here is a 501-residue protein sequence, read N- to C-terminus: Lysine--tRNA ligase (501 aa).

The Mg(2+) site is built by E411 and E418.

This sequence belongs to the class-II aminoacyl-tRNA synthetase family. In terms of assembly, homodimer. The cofactor is Mg(2+).

Its subcellular location is the cytoplasm. The catalysed reaction is tRNA(Lys) + L-lysine + ATP = L-lysyl-tRNA(Lys) + AMP + diphosphate. This chain is Lysine--tRNA ligase, found in Clostridium perfringens (strain SM101 / Type A).